Reading from the N-terminus, the 391-residue chain is Trehalose-phosphate phosphatase (391 aa).

The active-site Nucleophile is the D147. Mg(2+)-binding residues include D147, D149, and D330. 147-149 (DFD) provides a ligand contact to substrate.

This sequence belongs to the trehalose phosphatase family. Mg(2+) is required as a cofactor.

It catalyses the reaction alpha,alpha-trehalose 6-phosphate + H2O = alpha,alpha-trehalose + phosphate. It participates in glycan biosynthesis; trehalose biosynthesis. Removes the phosphate from trehalose 6-phosphate to produce free trehalose. The chain is Trehalose-phosphate phosphatase (otsB) from Mycobacterium avium (strain 104).